The sequence spans 730 residues: Dual function macrocyclase-peptidase POPB (730 aa).

Active-site charge relay system residues include S577, D661, and H698.

Belongs to the peptidase S9A family. In terms of assembly, monomer. Expressed in the pileus (cap) and lamellae where it colocalizes with amanitin.

It carries out the reaction Hydrolysis of Pro-|-Xaa &gt;&gt; Ala-|-Xaa in oligopeptides.. In terms of biological role, dual function macrocyclase-peptidase involved in the biosynthesis of the highly toxic amanitin toxin family of macrocycles. Cleaves peptide bonds on the C-terminal side of prolyl residues. The enzyme first removes 10 residues from the N-terminus of a 35-residue substrate. Conformational trapping of the 25 amino-acid peptide forces the enzyme to release this intermediate rather than proceed to macrocyclization. The enzyme rebinds the 25 amino-acid peptide in a different conformation and catalyzes macrocyclization of the N-terminal eight residues. The sequence is that of Dual function macrocyclase-peptidase POPB from Amanita bisporigera (Destroying angel).